Consider the following 1170-residue polypeptide: WD repeat-containing protein 35 (1170 aa).

5 WD repeats span residues 12–51 (PNNV…DDSK), 69–108 (GHSG…WYEE), 113–152 (RNKS…IWGK), 154–193 (LKGI…IMKM), and 491–528 (GTRD…LIQK).

As to quaternary structure, component of the IFT complex A (IFT-A) complex. IFT-A complex is divided into a core subcomplex composed of IFT122:IFT140:WDR19 which is associated with TULP3 and a peripheral subcomplex composed of IFT43:WDR35:TTC21B. Interacts directy with IFT122, ITF43 and TTC21B. Interacts with IFT43. Interacts with CFAP61. In terms of tissue distribution, expressed at high levels in testis and at lower levels in the brain (at protein level). Also present in other tissues, including heart, uterus, spinal cord, ovary, liver, kidney, lung, pancreas and stomach.

The protein localises to the cytoplasm. Its subcellular location is the cytoskeleton. It localises to the microtubule organizing center. It is found in the centrosome. The protein resides in the cilium axoneme. The protein localises to the cilium basal body. As a component of the IFT complex A (IFT-A), a complex required for retrograde ciliary transport and entry into cilia of G protein-coupled receptors (GPCRs), it is involved in ciliogenesis and ciliary protein trafficking. May promote CASP3 activation and TNF-stimulated apoptosis. The protein is WD repeat-containing protein 35 (Wdr35) of Rattus norvegicus (Rat).